We begin with the raw amino-acid sequence, 429 residues long: MGSPFKDHHHHHHPFSLAKKLIPWTFYAMIPLVLFRLYFYPYPLHNITTPILTSSSSSVSSSTPFVAEETSCDYTTGKWVRDKRGPLYNGSACGTIKEGQNCIAHGRPDMGYLYWRWKPKHCKLPRFEPNTFLQLLRNKHLAFVGDSMARNQLESLLCMLSSASAPNLVYRDGDDNKFRRWYFESHNINISVYWSPFLVKGVEKSNTGPNHNQLYLDHVDERWAADMNGIDMIVLSIGHWFLHPAVYYEGDQVLGCHYCPGLNHTEIGFYDVLRKAIKTTLKALIDRKGANSNGINAFVTTFSPAHFEGDWDKLGACPKTKPYKEGDKALEGMDADMRQIEVEEVEAAKMNSTQLEKFRLEALDVTSLSLMRPDGHPGPYMHPFPFANGVTERVQNDCVHWCLPGPIDTWNEILLEVIKKWDYESRREE.

Residues 1–20 (MGSPFKDHHHHHHPFSLAKK) are Cytoplasmic-facing. Residues 21–41 (LIPWTFYAMIPLVLFRLYFYP) traverse the membrane as a helical; Signal-anchor for type II membrane protein segment. The Lumenal segment spans residues 42–429 (YPLHNITTPI…KWDYESRREE (388 aa)). N46 and N89 each carry an N-linked (GlcNAc...) asparagine glycan. Disulfide bonds link C72-C122, C93-C158, C102-C402, and C317-C398. The GDS motif signature appears at 145–147 (GDS). Residue S147 is the Nucleophile of the active site. N189, N263, and N351 each carry an N-linked (GlcNAc...) asparagine glycan. The Proton donor role is filled by D397. Positions 397–400 (DCVH) match the DXXH motif motif. The active-site Proton acceptor is the H400.

This sequence belongs to the PC-esterase family. TBL subfamily.

It is found in the golgi apparatus membrane. Functionally, xyloglucan acetyltransferase that catalyzes the acetylation of fucosylated Gal residues on xyloglucan side chains. Predominantly catalyze 6-O-monoacetylation of Gal residues in the Fuc-Gal-Xyl trisaccharide side chains of xyloglucan oligomers. The protein is Xyloglucan O-acetyltransferase 1 of Populus trichocarpa (Western balsam poplar).